A 366-amino-acid polypeptide reads, in one-letter code: Lysophosphatidic acid receptor 1-B (366 aa).

The Extracellular portion of the chain corresponds to 1–52; that stretch reads MTSLSEFVSEPIGMMSQTSAASESQCYYNETIAFFYNRSGKYLDTEWNAVSK. 2 disulfides stabilise this stretch: cysteine 26–cysteine 192 and cysteine 190–cysteine 197. Asparagine 29 and asparagine 37 each carry an N-linked (GlcNAc...) asparagine glycan. Lysine 41 is an a 1-acyl-sn-glycero-3-phosphate binding site. Residues 53 to 77 form a helical membrane-spanning segment; it reads LVMGLGITVCIFIMLANLLVMVAIY. The Cytoplasmic portion of the chain corresponds to 78 to 85; that stretch reads VNRRFHFP. A helical transmembrane segment spans residues 86 to 109; it reads IYYLMANLAAADFFAGLAYFYLMF. The Extracellular segment spans residues 110–123; it reads NTGPNTRRLTVSTW. The helical transmembrane segment at 124-146 threads the bilayer; that stretch reads LLRQGLIDTSLTASVANLLAIAI. 126-131 is a binding site for a 1-acyl-sn-glycero-3-phosphate; sequence RQGLID. At 147-165 the chain is on the cytoplasmic side; the sequence is ERHITVFRMQLHTRMSNRR. The chain crosses the membrane as a helical span at residues 166-186; sequence VVVVIVVIWTVAIVMGAIPSV. At 187 to 206 the chain is on the extracellular side; it reads GWNCICDLEHCSNMAPLYSD. A helical transmembrane segment spans residues 207–227; the sequence is SYLIFWTIFNLVTFVVMVVLY. A 1-acyl-sn-glycero-3-phosphate is bound at residue tryptophan 212. Residues 228–257 lie on the Cytoplasmic side of the membrane; sequence AHIFVYVRQRTMRMSRHSSGPRRNRDTMMS. A helical transmembrane segment spans residues 258–282; that stretch reads LLKTVVIVLGAFIVCWTPGLVLLLL. At 283–296 the chain is on the extracellular side; that stretch reads DVCCPQCNILAYEK. Cysteines 286 and 289 form a disulfide. A helical transmembrane segment spans residues 297 to 317; it reads FFLLLAEFNSAMNPIIYSYRD. At 318-366 the chain is on the cytoplasmic side; sequence KEMSATFKQILCCQRTENVNGPTEGSDRSASSLNHTILAGVHSNDHSVV.

It belongs to the G-protein coupled receptor 1 family. Expressed at high levels in oocytes and at lower levels in brain and spinal cord. Below detection level in lung, heart, kidney, liver, muscle, stomach, and intestine.

It localises to the cell surface. It is found in the cell membrane. The protein localises to the endosome. Receptor for lysophosphatidic acid (LPA). Plays a role in the reorganization of the actin cytoskeleton, cell migration, differentiation and proliferation, and thereby contributes to the responses to tissue damage and infectious agents. Activates downstream signaling cascades via the G(i)/G(o), G(12)/G(13), and G(q) families of heteromeric G proteins. Signaling inhibits adenylyl cyclase activity and decreases cellular cAMP levels. Signaling triggers an increase of cytoplasmic Ca(2+) levels. Signaling leads to the activation of phospholipase C (PLC) and the formation of inositol 1,4,5-trisphosphate. Signaling mediates activation of down-stream MAP kinases. Contributes to the regulation of cell shape. Promotes Rho-dependent reorganization of the actin cytoskeleton in neuronal cells and neurite retraction. Promotes the activation of Rho and the formation of actin stress fibers. Promotes formation of lamellipodia at the leading edge of migrating cells via activation of Rac. Through its function as lysophosphatidic acid receptor, plays a role in chemotaxis and cell migration, including responses to injury and wounding. Promotes cell proliferation in response to lysophosphatidic acid. The polypeptide is Lysophosphatidic acid receptor 1-B (lpar1-b) (Xenopus laevis (African clawed frog)).